A 542-amino-acid polypeptide reads, in one-letter code: Membrane protein insertase YidC (542 aa).

A run of 5 helical transmembrane segments spans residues 7-27, 338-358, 417-437, 455-475, and 494-514; these read LLVMGLLLVSFLIFTQWQQDF, FALLTFIQSIVTNWGLAIIGV, MGGCLPILIQMPIFIALYWTF, LSAQDPYYILPLLMGASMFLL, and FMPVMFTVFFLWFPSGLVLYW.

Belongs to the OXA1/ALB3/YidC family. Type 1 subfamily. As to quaternary structure, interacts with the Sec translocase complex via SecD. Specifically interacts with transmembrane segments of nascent integral membrane proteins during membrane integration.

It localises to the cell inner membrane. Required for the insertion and/or proper folding and/or complex formation of integral membrane proteins into the membrane. Involved in integration of membrane proteins that insert both dependently and independently of the Sec translocase complex, as well as at least some lipoproteins. Aids folding of multispanning membrane proteins. In Actinobacillus pleuropneumoniae serotype 3 (strain JL03), this protein is Membrane protein insertase YidC.